Here is a 158-residue protein sequence, read N- to C-terminus: NAD(P)H-quinone oxidoreductase subunit J, chloroplastic (158 aa).

Belongs to the complex I 30 kDa subunit family. NDH is composed of at least 16 different subunits, 5 of which are encoded in the nucleus.

The protein localises to the plastid. It is found in the chloroplast thylakoid membrane. The enzyme catalyses a plastoquinone + NADH + (n+1) H(+)(in) = a plastoquinol + NAD(+) + n H(+)(out). The catalysed reaction is a plastoquinone + NADPH + (n+1) H(+)(in) = a plastoquinol + NADP(+) + n H(+)(out). Its function is as follows. NDH shuttles electrons from NAD(P)H:plastoquinone, via FMN and iron-sulfur (Fe-S) centers, to quinones in the photosynthetic chain and possibly in a chloroplast respiratory chain. The immediate electron acceptor for the enzyme in this species is believed to be plastoquinone. Couples the redox reaction to proton translocation, and thus conserves the redox energy in a proton gradient. This is NAD(P)H-quinone oxidoreductase subunit J, chloroplastic from Nandina domestica (Heavenly bamboo).